The chain runs to 299 residues: Protease HtpX homolog (299 aa).

2 helical membrane-spanning segments follow: residues 7–24 (GILM…GALI) and 29–46 (GAII…FTFW). Histidine 130 provides a ligand contact to Zn(2+). The active site involves glutamate 131. Residue histidine 134 coordinates Zn(2+). A run of 2 helical transmembrane segments spans residues 145-165 (VTAT…FFGG) and 174-194 (PVGI…AGLV). Glutamate 203 serves as a coordination point for Zn(2+).

The protein belongs to the peptidase M48B family. Zn(2+) serves as cofactor.

It localises to the cell inner membrane. This chain is Protease HtpX homolog, found in Cereibacter sphaeroides (strain ATCC 17025 / ATH 2.4.3) (Rhodobacter sphaeroides).